Here is a 351-residue protein sequence, read N- to C-terminus: Ribosomal RNA large subunit methyltransferase M (351 aa).

S-adenosyl-L-methionine-binding positions include S186, 219 to 222, D238, D258, and D274; that span reads APGG. Catalysis depends on K303, which acts as the Proton acceptor.

Belongs to the class I-like SAM-binding methyltransferase superfamily. RNA methyltransferase RlmE family. RlmM subfamily. In terms of assembly, monomer.

It is found in the cytoplasm. It carries out the reaction cytidine(2498) in 23S rRNA + S-adenosyl-L-methionine = 2'-O-methylcytidine(2498) in 23S rRNA + S-adenosyl-L-homocysteine + H(+). Its function is as follows. Catalyzes the 2'-O-methylation at nucleotide C2498 in 23S rRNA. This Xylella fastidiosa (strain 9a5c) protein is Ribosomal RNA large subunit methyltransferase M.